Here is a 538-residue protein sequence, read N- to C-terminus: Furcatin hydrolase (538 aa).

The N-terminal 66 residues, 1–66 (MATITTLASS…NFNKDNWLAS (66 aa)), are a transit peptide targeting the chloroplast. A disordered region spans residues 18–37 (SFPGGSSRKPKKDNLSIKPP). Residues glutamine 88, histidine 192, and 237–238 (NE) each bind a beta-D-glucoside. The active-site Proton donor is glutamate 238. Cysteine 257 and cysteine 260 are disulfide-bonded. A beta-D-glucoside-binding positions include tyrosine 376, glutamate 447, tryptophan 494, 501–502 (EW), and phenylalanine 510. Glutamate 447 acts as the Nucleophile in catalysis.

This sequence belongs to the glycosyl hydrolase 1 family. As to expression, expressed in young and mature leaves, but not in fruit and stem.

The protein resides in the plastid. Its subcellular location is the chloroplast. It catalyses the reaction 7-[beta-D-apiofuranosyl-(1-&gt;6)-beta-D-glucopyranosyloxy]isoflavonoid + H2O = a 7-hydroxyisoflavonoid + beta-D-apiofuranosyl-(1-&gt;6)-D-glucose.. Its function is as follows. Disaccharide-specific acuminosidase, hydrolyzes the beta-glycosidic bond between p-allylphenol and acuminose with retention of anomeric configuration. Has highest activity towards furcatin, and lower activity towards beta-primeverosides and beta-vicianoside. Has very low activity towards beta-gentobiosides. In Viburnum furcatum (Scarlet leaved viburnum), this protein is Furcatin hydrolase.